The chain runs to 183 residues: Apo-citrate lyase phosphoribosyl-dephospho-CoA transferase (183 aa).

Belongs to the CitX family.

The catalysed reaction is apo-[citrate lyase ACP] + 2'-(5''-triphospho-alpha-D-ribosyl)-3'-dephospho-CoA = holo-[citrate lyase ACP] + diphosphate. Transfers 2-(5''-triphosphoribosyl)-3'-dephosphocoenzyme-A on a serine residue to the apo-acyl carrier protein (gamma chain) of the citrate lyase to yield holo-acyl carrier protein. The polypeptide is Apo-citrate lyase phosphoribosyl-dephospho-CoA transferase (Escherichia coli O139:H28 (strain E24377A / ETEC)).